The chain runs to 205 residues: Cytochrome c biogenesis ATP-binding export protein CcmA 2 (205 aa).

Positions 2-205 (LEARDLYCER…LALTGGGAGL (204 aa)) constitute an ABC transporter domain. 34 to 41 (GGNGAGKT) provides a ligand contact to ATP.

This sequence belongs to the ABC transporter superfamily. CcmA exporter (TC 3.A.1.107) family. The complex is composed of two ATP-binding proteins (CcmA) and two transmembrane proteins (CcmB).

Its subcellular location is the cell inner membrane. The enzyme catalyses heme b(in) + ATP + H2O = heme b(out) + ADP + phosphate + H(+). In terms of biological role, part of the ABC transporter complex CcmAB involved in the biogenesis of c-type cytochromes; once thought to export heme, this seems not to be the case, but its exact role is uncertain. Responsible for energy coupling to the transport system. The polypeptide is Cytochrome c biogenesis ATP-binding export protein CcmA 2 (Salmonella typhimurium (strain LT2 / SGSC1412 / ATCC 700720)).